Here is a 135-residue protein sequence, read N- to C-terminus: Large ribosomal subunit protein mL41 (135 aa).

Residues 1–13 (MGVLSALARGFVR) constitute a mitochondrion transit peptide.

It belongs to the mitochondrion-specific ribosomal protein mL41 family. As to quaternary structure, component of the mitochondrial ribosome large subunit (39S) which comprises a 16S rRNA and about 50 distinct proteins.

It localises to the mitochondrion. Component of the mitochondrial ribosome large subunit. Also involved in apoptosis and cell cycle. This is Large ribosomal subunit protein mL41 (mrpl41) from Danio rerio (Zebrafish).